A 424-amino-acid polypeptide reads, in one-letter code: Putative glutamate--cysteine ligase 2-3 (424 aa).

2 disordered regions span residues 1-20 (MQMA…PVLV) and 405-424 (GAAA…VRRP).

Belongs to the glutamate--cysteine ligase type 2 family. YbdK subfamily.

It catalyses the reaction L-cysteine + L-glutamate + ATP = gamma-L-glutamyl-L-cysteine + ADP + phosphate + H(+). In terms of biological role, ATP-dependent carboxylate-amine ligase which exhibits weak glutamate--cysteine ligase activity. This Paenarthrobacter aurescens (strain TC1) protein is Putative glutamate--cysteine ligase 2-3.